The primary structure comprises 286 residues: 4-diphosphocytidyl-2-C-methyl-D-erythritol kinase (286 aa).

K11 is a catalytic residue. Residue 94 to 104 (PMGGGIGGGSS) participates in ATP binding. D136 is a catalytic residue.

Belongs to the GHMP kinase family. IspE subfamily.

It carries out the reaction 4-CDP-2-C-methyl-D-erythritol + ATP = 4-CDP-2-C-methyl-D-erythritol 2-phosphate + ADP + H(+). It participates in isoprenoid biosynthesis; isopentenyl diphosphate biosynthesis via DXP pathway; isopentenyl diphosphate from 1-deoxy-D-xylulose 5-phosphate: step 3/6. In terms of biological role, catalyzes the phosphorylation of the position 2 hydroxy group of 4-diphosphocytidyl-2C-methyl-D-erythritol. The polypeptide is 4-diphosphocytidyl-2-C-methyl-D-erythritol kinase (Pseudomonas putida (strain GB-1)).